Reading from the N-terminus, the 152-residue chain is Succinate dehydrogenase [ubiquinone] cytochrome b small subunit, mitochondrial (152 aa).

A mitochondrion-targeting transit peptide spans 1–21 (MATLLRVSSLCRANRASAFKS). The Mitochondrial matrix segment spans residues 22 to 56 (LLIRPVPCLTQDHHMVQTSQIHTSPNHHAGSKAAS). The chain crosses the membrane as a helical span at residues 57 to 78 (MHWTSERALSVALLGLLPAAYL). The Mitochondrial intermembrane segment spans residues 79–83 (YPGAA). Residues 84–104 (MDYSLAAALTLHGHWGLGQVV) form a helical membrane-spanning segment. Histidine 95 is a heme b binding site. Residues 105–113 (TDYVHGDAK) are Mitochondrial matrix-facing. A ubiquinone is bound at residue tyrosine 107. Residues 114-135 (IKMANTSLFALSALTFAGLCYF) traverse the membrane as a helical segment. Topologically, residues 136-152 (NYHDVGICKAVSMLWSL) are mitochondrial intermembrane.

It belongs to the CybS family. In terms of assembly, component of complex II composed of four subunits: the flavoprotein (FP) SDHA, iron-sulfur protein (IP) SDHB, and a cytochrome b560 composed of SDHC and SDHD.

It localises to the mitochondrion inner membrane. It participates in carbohydrate metabolism; tricarboxylic acid cycle. Its function is as follows. Membrane-anchoring subunit of succinate dehydrogenase (SDH) that is involved in complex II of the mitochondrial electron transport chain and is responsible for transferring electrons from succinate to ubiquinone (coenzyme Q). SDH also oxidizes malate to the non-canonical enol form of oxaloacetate, enol-oxaloacetate. Enol-oxaloacetate, which is a potent inhibitor of the succinate dehydrogenase activity, is further isomerized into keto-oxaloacetate. This chain is Succinate dehydrogenase [ubiquinone] cytochrome b small subunit, mitochondrial (sdhd), found in Xenopus tropicalis (Western clawed frog).